We begin with the raw amino-acid sequence, 194 residues long: Thymidine kinase (194 aa).

Residues 9-16 (GAMNSGKT) and 85-88 (DECQ) contribute to the ATP site. Glutamate 86 serves as the catalytic Proton acceptor. 4 residues coordinate Zn(2+): cysteine 143, cysteine 146, cysteine 180, and histidine 183.

This sequence belongs to the thymidine kinase family. Homotetramer.

Its subcellular location is the cytoplasm. It catalyses the reaction thymidine + ATP = dTMP + ADP + H(+). The polypeptide is Thymidine kinase (Enterococcus faecalis (strain ATCC 700802 / V583)).